Consider the following 178-residue polypeptide: Glucagon-2 (178 aa).

The signal sequence occupies residues 1-21; the sequence is MFGIHSLAGVLLLVIVQSQLA. Propeptides lie at residues 83–87, 123–134, and 171–178; these read SGAPS, ESAEESMNGPMS, and SNKRQEDH.

This sequence belongs to the glucagon family.

It localises to the secreted. Promotes hydrolysis of glycogen and lipids, and raises the blood sugar level. The polypeptide is Glucagon-2 (gcg2) (Oncorhynchus mykiss (Rainbow trout)).